The sequence spans 121 residues: MKGAQYLAGLLLLLFVQNSICVPLQDYHTSTETVEGLLARGQGFTTAKRHSEGTFSNDYSKYLETRRAQDFVEWLMNSKSNGGSAKRHAEGTYTSDISSFLRDQAAQNFVAWLKSGQPKQE.

The first 21 residues, 1–21, serve as a signal peptide directing secretion; it reads MKGAQYLAGLLLLLFVQNSIC. Positions 80–85 are excised as a propeptide; sequence SNGGSA.

Belongs to the glucagon family.

The protein resides in the secreted. In terms of biological role, plays a key role in glucose metabolism and homeostasis. Regulates blood glucose by increasing gluconeogenesis and decreasing glycolysis. This chain is Pro-glucagon (gcg), found in Carassius auratus (Goldfish).